We begin with the raw amino-acid sequence, 283 residues long: Bifunctional protein FolD 2 (283 aa).

Residues 165–167 (GRG), T192, and V233 contribute to the NADP(+) site.

Belongs to the tetrahydrofolate dehydrogenase/cyclohydrolase family. As to quaternary structure, homodimer.

The enzyme catalyses (6R)-5,10-methylene-5,6,7,8-tetrahydrofolate + NADP(+) = (6R)-5,10-methenyltetrahydrofolate + NADPH. The catalysed reaction is (6R)-5,10-methenyltetrahydrofolate + H2O = (6R)-10-formyltetrahydrofolate + H(+). It participates in one-carbon metabolism; tetrahydrofolate interconversion. In terms of biological role, catalyzes the oxidation of 5,10-methylenetetrahydrofolate to 5,10-methenyltetrahydrofolate and then the hydrolysis of 5,10-methenyltetrahydrofolate to 10-formyltetrahydrofolate. In Saccharopolyspora erythraea (strain ATCC 11635 / DSM 40517 / JCM 4748 / NBRC 13426 / NCIMB 8594 / NRRL 2338), this protein is Bifunctional protein FolD 2.